The chain runs to 150 residues: SsrA-binding protein (150 aa).

Belongs to the SmpB family.

The protein localises to the cytoplasm. Its function is as follows. Required for rescue of stalled ribosomes mediated by trans-translation. Binds to transfer-messenger RNA (tmRNA), required for stable association of tmRNA with ribosomes. tmRNA and SmpB together mimic tRNA shape, replacing the anticodon stem-loop with SmpB. tmRNA is encoded by the ssrA gene; the 2 termini fold to resemble tRNA(Ala) and it encodes a 'tag peptide', a short internal open reading frame. During trans-translation Ala-aminoacylated tmRNA acts like a tRNA, entering the A-site of stalled ribosomes, displacing the stalled mRNA. The ribosome then switches to translate the ORF on the tmRNA; the nascent peptide is terminated with the 'tag peptide' encoded by the tmRNA and targeted for degradation. The ribosome is freed to recommence translation, which seems to be the essential function of trans-translation. This Coprothermobacter proteolyticus (strain ATCC 35245 / DSM 5265 / OCM 4 / BT) protein is SsrA-binding protein.